A 1038-amino-acid chain; its full sequence is MKVLGEASSYPYRSCIIVVFLSVSLFWLRPSTYHPQQQNLNPENVTRLESENETKTNYIIRFKQYKPAKDHRIYLESKVRSGGWGWIERINPATKYPTDFGVLWIEESGKEAVVGEIERLEMVKDVNVEFKYQRVLLGGSFPDGKKRPGKIFTSMSFEEGTESSPMADTSNTTLNWSRHLLAQKTQVTSMFGADHLWKKGYTGAKVKMAIFDTGIRADHPHFRKIKERTNWTNEDTLNDNLGHGTFVAGVIAGRNPECLGFASDTEIYAFRVFTDAQVSYTSWFLDAFNYAIATDMDVLNLSIGGPDYLDLPFVEKVWEITASNIIMVSAIGNDGPLYGTLNNPADQSDVIGVGGIDNDDHIASFSSRGMSTWELPHGYGRVKPDVVAYGRDIMGSKISTGCKSLSGTSVASPVVAGIVCLLVSVIPEARRKDLLNPASMKQALVEGAAKLSGPNMYEQGAGRVDLLESYEILKSYHPRASIFPSILDYNDCPYSWPFCRQPLYAGAMPIIFNTTILNGMGVIGYIESPPTWHPANEEGNLLSIHFKYPDVIWPWTGYLALHMQIKEEGAQFTGEIEGNVTVKVYSPPASGESGPRRSTCSLQLKLKVIPTPPRAKRILWDQFHSIKYPPGYIPRDSLDVRNDILDWHGDHLHTNFHIMYNMLRDAGYYIETLGSPLTCFDAQQYGTLLMVDLEDDYFPEEIEKLRDDVINTGLGLVVFAEWYNVDTMVKMRFFDDNTRSWWTPVTGGANIPALNNLLASFGIAFGDKILNGDFSIDGEQSRYASGTNIVRFPAGGFLHTFPLLDSSESGATQNLLLTEASKEDPAVLGLLEIGEGRVGVYGDSNCLDSSHMVTNCYWLLKKMLDFSSSNIKDPVLFSKFAKRYSPVIIDEKQLPSRRTDVNFSTYSSVIGKELICESDSRFEVWGTKGYNLHVRGRNRRLPGYHGIDLGRGLNFTVESKRPTRWRSAKEGGELSSSRSKSLGGLFNRDEIDMPFLVPTRWIVLAGVVASGVLVLLSIWRIRQKRGRRRRASGSNRLA.

A signal peptide spans 1–30 (MKVLGEASSYPYRSCIIVVFLSVSLFWLRP). Positions 31–181 (STYHPQQQNL…TTLNWSRHLL (151 aa)) are cleaved as a propeptide — removed in mature form. 4 N-linked (GlcNAc...) asparagine glycosylation sites follow: N44, N52, N171, and N175. The Peptidase S8 domain occupies 175–473 (NWSRHLLAQK…VDLLESYEIL (299 aa)). Residues 182 to 1000 (AQKTQVTSMF…IDMPFLVPTR (819 aa)) are Lumenal-facing. The active-site Charge relay system is the D212. N230 carries an N-linked (GlcNAc...) asparagine glycan. H243 acts as the Charge relay system in catalysis. N-linked (GlcNAc...) asparagine glycosylation occurs at N300. S409 serves as the catalytic Charge relay system. 4 N-linked (GlcNAc...) asparagine glycosylation sites follow: N513, N579, N902, and N954. A helical membrane pass occupies residues 1001–1021 (WIVLAGVVASGVLVLLSIWRI). At 1022-1038 (RQKRGRRRRASGSNRLA) the chain is on the cytoplasmic side.

The protein belongs to the peptidase S8 family. As to quaternary structure, interacts with PME1 and PME5. In terms of tissue distribution, expressed in the vasculature of roots, cotyledons and leaves.

The protein localises to the golgi apparatus membrane. In terms of biological role, serine protease that catalyzes the first step (site-1 cleavage) in the proteolytic activation of various factors, prior to site-2 cleavage. Part of a regulated intramembrane proteolysis (RIP) cascade. Cleaves BZIP17 and BZIP28 after the Arg-Arg-Ile-Leu (RRIL) motif. May cleave BZIP49 after the RRIL motif. Targets the membrane-associated BZIP17 factor, which functions as a stress sensor and transducer in a signaling pathway that resembles an ER stress response. Following salt stress, BZIP17 is cleaved by SBT6.1 (S1P) and S2P at the C-terminus and the N-terminal bZIP component is translocated to the nucleus, where it activates the expression of salt stress response genes. Cleaves the pectinesterases PME1 after the Arg-Arg-Leu-Met (RRLM) and Arg-Arg-Leu-Leu (RRLL) motifs, and PME5 after the Arg-Arg-Leu-Leu (RRLL) and Arg-Lys-Leu-Met (RKLM) motifs. This processing and C-terminus release occurs in the Golgi apparatus and is required for cell wall targeting of pectinesterases. Thus, SBT6.1 mediates the regulated release of mature pectinesterases from the Golgi. Cleaves the peptide growth factor RALF23 after the Arg-Arg-Ile-Leu (RRIL) motif. This processing is required for RALF23 function in the negative regulation of brassinolide (BL)-mediated signaling pathway (e.g. BL-induced hypocotyl elongation and branching limitation). This chain is Subtilisin-like protease SBT6.1, found in Arabidopsis thaliana (Mouse-ear cress).